The chain runs to 248 residues: Amphiregulin (248 aa).

The signal sequence occupies residues 1–26 (MRTPLLPLARSVLLLLVLGSGHYAAA). The propeptide occupies 27–99 (LELNDPSSGK…IIDDSVRVEQ (73 aa)). Disordered regions lie at residues 29-48 (LNDP…SAGG), 57-77 (VSTI…YDYS), and 100-136 (VIKP…KKKK). Residues 58-70 (STISEMPSGSELS) are compositionally biased toward polar residues. Positions 100-116 (VIKPKKNKTEGEKSTEK) are enriched in basic and acidic residues. The N-linked (GlcNAc...) asparagine glycan is linked to Asn-106. Over residues 117 to 136 (PKRKKKGGKNGKGRRNKKKK) the composition is skewed to basic residues. The region spanning 135–175 (KKNPCTAKFQNFCIHGECRYIENLEVVTCNCHQDYFGERCG) is the EGF-like domain. 3 cysteine pairs are disulfide-bonded: Cys-139–Cys-152, Cys-147–Cys-163, and Cys-165–Cys-174. The chain crosses the membrane as a helical span at residues 192 to 215 (IAVVAVTIFVSAIILAAIGIGIVI). N-linked (GlcNAc...) asparagine glycosylation occurs at Asn-241.

Belongs to the amphiregulin family. In terms of assembly, the immature precursor interacts with CNIH.

Its subcellular location is the membrane. Ligand of the EGF receptor/EGFR. Autocrine growth factor as well as a mitogen for a broad range of target cells including astrocytes, Schwann cells and fibroblasts. This is Amphiregulin (Areg) from Mus musculus (Mouse).